Reading from the N-terminus, the 682-residue chain is Zinc finger protein 16 (682 aa).

Basic and acidic residues predominate over residues 1 to 10 (MPSLRTRREE). Positions 1 to 38 (MPSLRTRREEAEMELSAPGPSPWTPAAQARVSDAPAVT) are disordered. The interval 62–210 (YQQPDCDTRT…GVPTAESPLI (149 aa)) is necessary for transcription activation. Residues 209 to 231 (LICNECGKTFRGNPDLIQRQIVH) form a C2H2-type 1; degenerate zinc finger. Residues 237–259 (FMCDDCGKTFSQNSVLKNRHRSH) form a C2H2-type 2; degenerate zinc finger. K253 is covalently cross-linked (Glycyl lysine isopeptide (Lys-Gly) (interchain with G-Cter in SUMO2)). C2H2-type zinc fingers lie at residues 265–287 (YQCSECGKAFRGHSDFSRHQSHH), 293–315 (YTCTECGKAFSQNSSLKKHQKSH), 321–343 (YECNECGKAFRRSSNLIQHQRIH), 349–371 (YVCSECGKAFRRSSNLIKHHRTH), 377–399 (FECGECGKAFSQSAHLRKHQRVH), 405–427 (YECNDCGKPFSRVSNLIKHHRVH), 433–455 (YKCSDCGKXFSQSSSLIQHRRIH), and 461–483 (HVCNVCGKAFSYSSVLRKHQIIH). 2 required for nuclear localization regions span residues 268–393 (SECG…AHLR) and 341–373 (RIHSGEKPYVCSECGKAFRRSSNLIKHHRTHTG). Residues 473-503 (SSVLRKHQIIHTGEKPYRCSVCGKAFSHSSA) form a required for nuclear localization region. Residue K487 is modified to N6-acetyllysine. 7 consecutive C2H2-type zinc fingers follow at residues 489-511 (YRCSVCGKAFSHSSALIQHQGVH), 517-539 (YACHECGKTFGRSSNLILHQRVH), 545-567 (YECTECGKTFSQSSTLIQHQRIH), 573-595 (HECNQCGKAFNRSSNLIHHQKVH), 601-623 (YTCVECGKGFSQSSHLIQHQIIH), 629-651 (YKCSECGKAFSQRSVLIQHQRIH), and 657-679 (YDCAACGKAFSQRSKLIKHQLIH).

It belongs to the krueppel C2H2-type zinc-finger protein family. As to quaternary structure, interacts with INCA1; the interaction inhibits INCA1 activity and induces the cell cycle process.

It is found in the nucleus. Its function is as follows. Acts as a transcriptional activator. Promotes cell proliferation by facilitating the cell cycle phase transition from the S to G2/M phase. Involved in both the hemin- and phorbol myristate acetate (PMA)-induced erythroid and megakaryocytic differentiation, respectively. Also plays a role as an inhibitor of cell apoptosis. The polypeptide is Zinc finger protein 16 (ZNF16) (Pan troglodytes (Chimpanzee)).